The chain runs to 445 residues: Adenylosuccinate synthetase (445 aa).

Residues 12-18 (GDEGKGK) and 40-42 (GHT) contribute to the GTP site. Catalysis depends on Asp-13, which acts as the Proton acceptor. Mg(2+) contacts are provided by Asp-13 and Gly-40. IMP-binding positions include 13 to 16 (DEGK), 38 to 41 (NAGH), Thr-128, Arg-142, Gln-223, Thr-238, and Arg-302. The active-site Proton donor is His-41. 298-304 (TTTGRKR) contributes to the substrate binding site. GTP contacts are provided by residues Arg-304, 330–332 (KLD), and 411–413 (SLG).

This sequence belongs to the adenylosuccinate synthetase family. Homodimer. The cofactor is Mg(2+).

It localises to the cytoplasm. The enzyme catalyses IMP + L-aspartate + GTP = N(6)-(1,2-dicarboxyethyl)-AMP + GDP + phosphate + 2 H(+). It functions in the pathway purine metabolism; AMP biosynthesis via de novo pathway; AMP from IMP: step 1/2. Plays an important role in the de novo pathway of purine nucleotide biosynthesis. Catalyzes the first committed step in the biosynthesis of AMP from IMP. This chain is Adenylosuccinate synthetase, found in Cyanothece sp. (strain PCC 7425 / ATCC 29141).